The following is a 304-amino-acid chain: Non-specific ribonucleoside hydrolase RihC (304 aa).

The active site involves histidine 233.

It belongs to the IUNH family. RihC subfamily.

In terms of biological role, hydrolyzes both purine and pyrimidine ribonucleosides with a broad-substrate specificity. This Shigella boydii serotype 18 (strain CDC 3083-94 / BS512) protein is Non-specific ribonucleoside hydrolase RihC.